The following is a 127-amino-acid chain: MARIAGVDLPRNKTIEIAITYIFGIGRSNGADVLRKANVNPATRVRDLTEEEVSRIREIVEREYRVEGDLRREIQMNIKRLMDIGCYRGLRHRKGLPVRGQRTRTNARTRRGRRGQAIGIKKKTLKK.

Residues 99-127 (RGQRTRTNARTRRGRRGQAIGIKKKTLKK) are disordered.

This sequence belongs to the universal ribosomal protein uS13 family. Part of the 30S ribosomal subunit. Forms a loose heterodimer with protein S19. Forms two bridges to the 50S subunit in the 70S ribosome.

Located at the top of the head of the 30S subunit, it contacts several helices of the 16S rRNA. In the 70S ribosome it contacts the 23S rRNA (bridge B1a) and protein L5 of the 50S subunit (bridge B1b), connecting the 2 subunits; these bridges are implicated in subunit movement. Contacts the tRNAs in the A and P-sites. In Roseiflexus castenholzii (strain DSM 13941 / HLO8), this protein is Small ribosomal subunit protein uS13.